Consider the following 165-residue polypeptide: Thiol peroxidase (165 aa).

In terms of domain architecture, Thioredoxin spans 18–165 (PQKGAQAPAF…PNYAAALAAL (148 aa)). The active-site Cysteine sulfenic acid (-SOH) intermediate is Cys-60. A disulfide bridge connects residues Cys-60 and Cys-94.

Belongs to the peroxiredoxin family. Tpx subfamily. Homodimer.

The enzyme catalyses a hydroperoxide + [thioredoxin]-dithiol = an alcohol + [thioredoxin]-disulfide + H2O. Its function is as follows. Thiol-specific peroxidase that catalyzes the reduction of hydrogen peroxide and organic hydroperoxides to water and alcohols, respectively. Plays a role in cell protection against oxidative stress by detoxifying peroxides. The protein is Thiol peroxidase of Pseudomonas aeruginosa (strain ATCC 15692 / DSM 22644 / CIP 104116 / JCM 14847 / LMG 12228 / 1C / PRS 101 / PAO1).